Consider the following 501-residue polypeptide: Proline--tRNA ligase (501 aa).

This sequence belongs to the class-II aminoacyl-tRNA synthetase family.

The enzyme catalyses tRNA(Pro) + L-proline + ATP = L-prolyl-tRNA(Pro) + AMP + diphosphate. The chain is Proline--tRNA ligase from Encephalitozoon cuniculi (strain GB-M1) (Microsporidian parasite).